The primary structure comprises 502 residues: Probable cytosol aminopeptidase (502 aa).

Mn(2+) is bound by residues Lys269 and Asp274. Lys281 is an active-site residue. Asp292, Asp351, and Glu353 together coordinate Mn(2+). The active site involves Arg355.

This sequence belongs to the peptidase M17 family. It depends on Mn(2+) as a cofactor.

It localises to the cytoplasm. It catalyses the reaction Release of an N-terminal amino acid, Xaa-|-Yaa-, in which Xaa is preferably Leu, but may be other amino acids including Pro although not Arg or Lys, and Yaa may be Pro. Amino acid amides and methyl esters are also readily hydrolyzed, but rates on arylamides are exceedingly low.. It carries out the reaction Release of an N-terminal amino acid, preferentially leucine, but not glutamic or aspartic acids.. Its function is as follows. Presumably involved in the processing and regular turnover of intracellular proteins. Catalyzes the removal of unsubstituted N-terminal amino acids from various peptides. The protein is Probable cytosol aminopeptidase of Shewanella sediminis (strain HAW-EB3).